Reading from the N-terminus, the 4034-residue chain is Polyketide synthase-nonribosomal peptide synthetase ACE1 (4034 aa).

The 439-residue stretch at 10 to 448 folds into the Ketosynthase family 3 (KS3) domain; sequence TEPIAIIGSG…GANAHVILES (439 aa). Residues cysteine 183, histidine 322, and histidine 368 each act as for beta-ketoacyl synthase activity in the active site. An acyl transferase region spans residues 560–879; it reads VFTGQGAQWA…PYFGCLSRGT (320 aa). Residues 951–1082 are N-terminal hotdog fold; it reads NELLGTRLPD…GDLVVLLGEP (132 aa). A PKS/mFAS DH domain is found at 951–1257; that stretch reads NELLGTRLPD…TKPLSPPSAA (307 aa). Residues 952–1252 form a dehydratase (DH) domain region; it reads ELLGTRLPDD…LQGLHTKPLS (301 aa). Histidine 983 serves as the catalytic Proton acceptor; for dehydratase activity. The segment at 1097–1257 is C-terminal hotdog fold; the sequence is MKDIDEERFY…TKPLSPPSAA (161 aa). Aspartate 1157 functions as the Proton donor; for dehydratase activity in the catalytic mechanism. The methyltransferase (MT) domain stretch occupies residues 1396–1594; the sequence is NMLNRFYSDA…SGADIVTPHH (199 aa). The tract at residues 2144–2317 is ketoreductase (KR)domain; it reads TYWLVGLTGG…AGSSVEIGCI (174 aa). One can recognise a Carrier 1 domain in the interval 2424 to 2505; it reads KSSEEVLDIL…LLLEFVQGLI (82 aa). Serine 2465 is subject to O-(pantetheine 4'-phosphoryl)serine. Residues 2512–2598 form a disordered region; that stretch reads KLDGSDGADA…SPTTSASMAS (87 aa). A compositionally biased stretch (low complexity) spans 2556 to 2577; sequence PSGPASPTSPSSATASPGRSRS. Residues 2586-2598 show a composition bias toward polar residues; sequence TPVSPTTSASMAS. The condensation stretch occupies residues 2608–3037; the sequence is TVPVSFGQSR…ATSLNRPAIY (430 aa). The adenylation stretch occupies residues 3073 to 3473; sequence KYATKFALRN…GGLIIEGRID (401 aa). The Carrier 2 domain occupies 3598–3678; sequence AELGSDQARM…AMTDLVLSDD (81 aa). Serine 3638 is subject to O-(pantetheine 4'-phosphoryl)serine. A reductase-like region spans residues 3719 to 3944; sequence LTGATGFLGR…DFVSVENVAA (226 aa).

The protein belongs to the NRP synthetase family.

The protein resides in the cytoplasm. Its pathway is secondary metabolite biosynthesis. Hybrid PKS-NRPS synthetase; part of the gene cluster that mediates the biosynthesis of a tyrosine-derived cytochalasan acting as a fungal signal recognized by resistant rice plants and leads to avirulence in Pi33 resistant rice cultivars. The first step in the pathway is catalyzed by the hybrid PKS-NRPS ACE1, assisted by the enoyl reductase RAP1, that are responsible for fusion of the tyrosine precursor and the polyketide backbone. The polyketide synthase module (PKS) of ACE1 is responsible for the synthesis of the polyketide backbone and the downstream nonribosomal peptide synthetase (NRPS) amidates the carboxyl end of the polyketide with the tyrosine precursor. Because ACE1 lacks a designated enoylreductase (ER) domain, the required activity is provided the enoyl reductase RAP1. Reduction by the hydrolyase ORFZ, followed by dehydration and intra-molecular Diels-Alder cyclization by the Diels-Alderase ORF3 then yield the required isoindolone-fused macrocycle. A number of oxidative steps catalyzed by the tailoring enzymes identified within the cluster, including cytochrome P450 monooxygenases CYP1 to CYP4, the FAD-linked oxidoreductase OXR2 and the short-chain dehydrogenase/reductase OXR1, are further required to afford the final cytochalasans that confer avirulence and which have still to be identified. The monooxygenase CYP1 has been shown to be a site-selective C-18 hydroxylase whereas the function of CYP3 is the site-selective epoxidation of the C-6/C-7 olefin that is present in some intermediate compounds. Finally, SYN2 and RAP2 are not required for avirulence in Pi33 resistant rice cultivars. This Pyricularia oryzae (strain 70-15 / ATCC MYA-4617 / FGSC 8958) (Rice blast fungus) protein is Polyketide synthase-nonribosomal peptide synthetase ACE1.